A 307-amino-acid chain; its full sequence is Bifunctional protein FolD (307 aa).

NADP(+)-binding positions include 165–167, Ser190, and Ile231; that span reads GRS.

It belongs to the tetrahydrofolate dehydrogenase/cyclohydrolase family. Homodimer.

The catalysed reaction is (6R)-5,10-methylene-5,6,7,8-tetrahydrofolate + NADP(+) = (6R)-5,10-methenyltetrahydrofolate + NADPH. The enzyme catalyses (6R)-5,10-methenyltetrahydrofolate + H2O = (6R)-10-formyltetrahydrofolate + H(+). The protein operates within one-carbon metabolism; tetrahydrofolate interconversion. Functionally, catalyzes the oxidation of 5,10-methylenetetrahydrofolate to 5,10-methenyltetrahydrofolate and then the hydrolysis of 5,10-methenyltetrahydrofolate to 10-formyltetrahydrofolate. The polypeptide is Bifunctional protein FolD (Koribacter versatilis (strain Ellin345)).